The chain runs to 574 residues: Proline--tRNA ligase (574 aa).

It belongs to the class-II aminoacyl-tRNA synthetase family. ProS type 1 subfamily. Homodimer.

The protein resides in the cytoplasm. The enzyme catalyses tRNA(Pro) + L-proline + ATP = L-prolyl-tRNA(Pro) + AMP + diphosphate. In terms of biological role, catalyzes the attachment of proline to tRNA(Pro) in a two-step reaction: proline is first activated by ATP to form Pro-AMP and then transferred to the acceptor end of tRNA(Pro). As ProRS can inadvertently accommodate and process non-cognate amino acids such as alanine and cysteine, to avoid such errors it has two additional distinct editing activities against alanine. One activity is designated as 'pretransfer' editing and involves the tRNA(Pro)-independent hydrolysis of activated Ala-AMP. The other activity is designated 'posttransfer' editing and involves deacylation of mischarged Ala-tRNA(Pro). The misacylated Cys-tRNA(Pro) is not edited by ProRS. This is Proline--tRNA ligase from Aeromonas hydrophila subsp. hydrophila (strain ATCC 7966 / DSM 30187 / BCRC 13018 / CCUG 14551 / JCM 1027 / KCTC 2358 / NCIMB 9240 / NCTC 8049).